Here is a 66-residue protein sequence, read N- to C-terminus: Large ribosomal subunit protein bL35 (66 aa).

A compositionally biased stretch (basic residues) spans 1–16; sequence MPKMKTHKGSAKRFKK. The interval 1-24 is disordered; the sequence is MPKMKTHKGSAKRFKKTGTGQLKR.

This sequence belongs to the bacterial ribosomal protein bL35 family.

The sequence is that of Large ribosomal subunit protein bL35 from Anoxybacillus flavithermus (strain DSM 21510 / WK1).